A 184-amino-acid chain; its full sequence is Shikimate kinase (184 aa).

17–22 (GAGKTT) serves as a coordination point for ATP. Thr-21 serves as a coordination point for Mg(2+). Asp-39, Arg-63, and Gly-85 together coordinate substrate. Arg-123 provides a ligand contact to ATP. Arg-142 is a substrate binding site.

Belongs to the shikimate kinase family. As to quaternary structure, monomer. It depends on Mg(2+) as a cofactor.

It localises to the cytoplasm. It catalyses the reaction shikimate + ATP = 3-phosphoshikimate + ADP + H(+). It participates in metabolic intermediate biosynthesis; chorismate biosynthesis; chorismate from D-erythrose 4-phosphate and phosphoenolpyruvate: step 5/7. Functionally, catalyzes the specific phosphorylation of the 3-hydroxyl group of shikimic acid using ATP as a cosubstrate. In Burkholderia thailandensis (strain ATCC 700388 / DSM 13276 / CCUG 48851 / CIP 106301 / E264), this protein is Shikimate kinase.